A 492-amino-acid polypeptide reads, in one-letter code: Glutamyl-tRNA(Gln) amidotransferase subunit A (492 aa).

Residues Lys81 and Ser156 each act as charge relay system in the active site. The active-site Acyl-ester intermediate is the Ser180.

Belongs to the amidase family. GatA subfamily. Heterotrimer of A, B and C subunits.

The catalysed reaction is L-glutamyl-tRNA(Gln) + L-glutamine + ATP + H2O = L-glutaminyl-tRNA(Gln) + L-glutamate + ADP + phosphate + H(+). In terms of biological role, allows the formation of correctly charged Gln-tRNA(Gln) through the transamidation of misacylated Glu-tRNA(Gln) in organisms which lack glutaminyl-tRNA synthetase. The reaction takes place in the presence of glutamine and ATP through an activated gamma-phospho-Glu-tRNA(Gln). This Rhodococcus erythropolis (strain PR4 / NBRC 100887) protein is Glutamyl-tRNA(Gln) amidotransferase subunit A.